We begin with the raw amino-acid sequence, 323 residues long: Replication factor C subunit 4 (323 aa).

ATP is bound by residues V12, V24, 49-57 (GMPGIGKTT), N145, and R203.

It belongs to the activator 1 small subunits family. In terms of assembly, replication factor C (RFC) is a heteropentamer of subunits RFC1, RFC2, RFC3, RFC4 and RFC5 and forms a complex with POL30/PCNA in the presence of ATP. Component of the RAD24-RFC complex which consists of RAD14, RFC2, RFC3, RFC4 and RFC5 and associates with the checkpoint clamp DDC1:MEC3:RAD17 complex. Component of the ELG1-RFC complex which consists of ELG1, RFC2, RFC3, RFC4 and RFC5. Component of the CTF18-RFC complex, which consists of CTF18, CTF8, DCC1, RFC2, RFC3, RFC4 and RFC5. RFC4 interacts with ECO1.

Its subcellular location is the nucleus. Functionally, component of ATP-dependent clamp loader (RFC and RFC-like) complexes for DNA clamps, such as the POL30/PCNA homotrimer and the checkpoint clamp DDC1:MEC3:RAD17 complex. During a clamp loading circle, the RFC:clamp complex binds to DNA and the recognition of the double-stranded/single-stranded junction stimulates ATP hydrolysis by RFC. The complex presumably provides bipartite ATP sites in which one subunit supplies a catalytic site for hydrolysis of ATP bound to the neighboring subunit. Dissociation of RFC from the clamp leaves the clamp encircling DNA. Component of the replication factor C (RFC or activator 1) complex which loads POL30/PCNA and acts during elongation of primed DNA templates by DNA polymerase delta and epsilon. RFC has an essential but redundant activity in sister chromatid cohesion establishment. Component of the RFC-like complex CTF18-RFC which is required for efficient establishment of chromosome cohesion during S-phase and may load or unload POL30/PCNA. Component of the RFC-like RAD24-RFC complex which loads the checkpoint clamp DDC1:MEC3:RAD17 complex and is involved in DNA repair pathways. Component of the RFC-like ELG1-RFC complex which appears to have a role in DNA replication, replication fork re-start, recombination and repair. This chain is Replication factor C subunit 4 (RFC4), found in Saccharomyces cerevisiae (strain ATCC 204508 / S288c) (Baker's yeast).